Reading from the N-terminus, the 162-residue chain is Putative pre-16S rRNA nuclease (162 aa).

It belongs to the YqgF nuclease family.

The protein resides in the cytoplasm. Functionally, could be a nuclease involved in processing of the 5'-end of pre-16S rRNA. This is Putative pre-16S rRNA nuclease from Brucella melitensis biotype 2 (strain ATCC 23457).